Reading from the N-terminus, the 335-residue chain is Ornithine carbamoyltransferase (335 aa).

Carbamoyl phosphate is bound by residues 56–59, glutamine 83, arginine 107, and 134–137; these read STRT and HPTQ. Residues asparagine 168, aspartate 232, and 236–237 each bind L-ornithine; that span reads SM. Carbamoyl phosphate is bound by residues 274–275 and arginine 320; that span reads CL.

It belongs to the aspartate/ornithine carbamoyltransferase superfamily. OTCase family.

Its subcellular location is the cytoplasm. The enzyme catalyses carbamoyl phosphate + L-ornithine = L-citrulline + phosphate + H(+). It participates in amino-acid biosynthesis; L-arginine biosynthesis; L-arginine from L-ornithine and carbamoyl phosphate: step 1/3. In terms of biological role, reversibly catalyzes the transfer of the carbamoyl group from carbamoyl phosphate (CP) to the N(epsilon) atom of ornithine (ORN) to produce L-citrulline. This chain is Ornithine carbamoyltransferase, found in Pectobacterium atrosepticum (strain SCRI 1043 / ATCC BAA-672) (Erwinia carotovora subsp. atroseptica).